The following is a 74-amino-acid chain: Large ribosomal subunit protein bL27c (74 aa).

It belongs to the bacterial ribosomal protein bL27 family.

Its subcellular location is the plastid. It is found in the chloroplast. The polypeptide is Large ribosomal subunit protein bL27c (rpl27) (Pleurochrysis haptonemofera (Unicellular marine alga)).